Here is a 131-residue protein sequence, read N- to C-terminus: Small ribosomal subunit protein uS8 (131 aa).

It belongs to the universal ribosomal protein uS8 family. Part of the 30S ribosomal subunit. Contacts proteins S5 and S12.

Functionally, one of the primary rRNA binding proteins, it binds directly to 16S rRNA central domain where it helps coordinate assembly of the platform of the 30S subunit. The protein is Small ribosomal subunit protein uS8 of Albidiferax ferrireducens (strain ATCC BAA-621 / DSM 15236 / T118) (Rhodoferax ferrireducens).